The sequence spans 376 residues: Protein RecA (376 aa).

ATP is bound at residue 79–86; the sequence is GPESSGKT. The tract at residues 357 to 376 is disordered; it reads AAARAATDKPVETKGANAAA.

The protein belongs to the RecA family.

Its subcellular location is the cytoplasm. Its function is as follows. Can catalyze the hydrolysis of ATP in the presence of single-stranded DNA, the ATP-dependent uptake of single-stranded DNA by duplex DNA, and the ATP-dependent hybridization of homologous single-stranded DNAs. It interacts with LexA causing its activation and leading to its autocatalytic cleavage. The polypeptide is Protein RecA (Synechococcus sp. (strain CC9902)).